Reading from the N-terminus, the 145-residue chain is 3-hydroxyacyl-[acyl-carrier-protein] dehydratase FabZ (145 aa).

The active site involves histidine 48.

This sequence belongs to the thioester dehydratase family. FabZ subfamily.

The protein localises to the cytoplasm. The enzyme catalyses a (3R)-hydroxyacyl-[ACP] = a (2E)-enoyl-[ACP] + H2O. Involved in unsaturated fatty acids biosynthesis. Catalyzes the dehydration of short chain beta-hydroxyacyl-ACPs and long chain saturated and unsaturated beta-hydroxyacyl-ACPs. This is 3-hydroxyacyl-[acyl-carrier-protein] dehydratase FabZ from Marinobacter nauticus (strain ATCC 700491 / DSM 11845 / VT8) (Marinobacter aquaeolei).